Reading from the N-terminus, the 421-residue chain is Serine protease HTRA2, mitochondrial (421 aa).

The helical transmembrane segment at 63-81 threads the bilayer; the sequence is VIRFFVPFSLGALASTMVA. Residues 74 to 77 carry the IAP-binding motif; sequence ALAS. Positions 138–301 are serine protease; it reads SNGSGFVIEQ…IPIDYVKVFL (164 aa). Catalysis depends on charge relay system residues H156, D188, and S265. The PDZ domain maps to 324-409; that stretch reads MGITMLTLTP…ELDIVILRGV (86 aa).

It belongs to the peptidase S1C family. Interacts with th/DIAP1 (via BIR 2 domain).

The protein localises to the mitochondrion intermembrane space. It localises to the mitochondrion membrane. The enzyme catalyses Cleavage of non-polar aliphatic amino-acids at the P1 position, with a preference for Val, Ile and Met. At the P2 and P3 positions, Arg is selected most strongly with a secondary preference for other hydrophilic residues.. Functionally, serine protease that shows proteolytic activity against a non-specific substrate beta-casein. Promotes or induces cell death either by direct binding to and inhibition of BIRC proteins (also called inhibitor of apoptosis proteins, IAPs), leading to an increase in caspase activity, or by a BIRC inhibition-independent, caspase-independent and serine protease activity-dependent mechanism. Can antagonize antiapoptotic activity of th/Diap1 by directly inducing the degradation of th/Diap1. The polypeptide is Serine protease HTRA2, mitochondrial (Drosophila virilis (Fruit fly)).